A 124-amino-acid polypeptide reads, in one-letter code: Large ribosomal subunit protein bL12 (124 aa).

It belongs to the bacterial ribosomal protein bL12 family. As to quaternary structure, homodimer. Part of the ribosomal stalk of the 50S ribosomal subunit. Forms a multimeric L10(L12)X complex, where L10 forms an elongated spine to which 2 to 4 L12 dimers bind in a sequential fashion. Binds GTP-bound translation factors.

In terms of biological role, forms part of the ribosomal stalk which helps the ribosome interact with GTP-bound translation factors. Is thus essential for accurate translation. This Leptothrix cholodnii (strain ATCC 51168 / LMG 8142 / SP-6) (Leptothrix discophora (strain SP-6)) protein is Large ribosomal subunit protein bL12.